A 310-amino-acid chain; its full sequence is Calbindin-32 (310 aa).

EF-hand domains are found at residues 35-70, 84-120, 131-166, 177-212, 224-259, and 283-304; these read LSAN…FVSS, TMLE…EENF, ESSV…LLKE, KLIE…KENF, LTKE…LLEL, and TDKH…LAKI. 25 residues coordinate Ca(2+): aspartate 48, aspartate 50, asparagine 52, tyrosine 54, glutamate 59, aspartate 98, asparagine 100, aspartate 102, lysine 104, glutamate 109, aspartate 144, aspartate 146, serine 148, tyrosine 150, glutamate 155, aspartate 190, asparagine 192, aspartate 194, arginine 196, glutamate 201, aspartate 237, aspartate 239, serine 241, threonine 243, and glutamate 248.

This sequence belongs to the calbindin family. As to expression, expressed in a large number of neuron of the brain and the thoracic ganglion as well as in two small muscles of the thorax.

The protein is Calbindin-32 (Cbp53E) of Drosophila melanogaster (Fruit fly).